The primary structure comprises 505 residues: Endoglucanase 5 (505 aa).

An N-terminal signal peptide occupies residues 1–31; the sequence is MWMRRNQIVRKLTLGVVTTVLGMSLSFSALS. The tract at residues 32–334 is catalytic; sequence ATPVETHGQL…REQIRAGANL (303 aa). Substrate is bound by residues His-64, 68–69, Tyr-95, and His-130; that span reads WF. Residue Glu-168 is the Proton donor of the active site. Tyr-230 is a binding site for substrate. Glu-256 functions as the Nucleophile in the catalytic mechanism. Residues 262-263, Trp-290, and 295-297 contribute to the substrate site; these read AS and KSE. The segment at 332-355 is disordered; that stretch reads ANLGGGDTPTTPTEPTNPGNGTTG. Residues 335 to 352 form a linker region; sequence GGGDTPTTPTEPTNPGNG. Residues 339-355 are compositionally biased toward low complexity; it reads TPTTPTEPTNPGNGTTG. Positions 353-505 constitute a CBM3 domain; it reads TTGDVVLQYR…KGTLVWGVEP (153 aa).

The protein belongs to the glycosyl hydrolase 5 (cellulase A) family.

It localises to the secreted. It carries out the reaction Endohydrolysis of (1-&gt;4)-beta-D-glucosidic linkages in cellulose, lichenin and cereal beta-D-glucans.. Functionally, endoglucanase with some exoglucanase activity. This chain is Endoglucanase 5 (celV), found in Pectobacterium carotovorum subsp. carotovorum (Erwinia carotovora subsp. carotovora).